A 340-amino-acid polypeptide reads, in one-letter code: MNTRFLDACWGKPVDRVPVWLMRQAGRYLPEYMAVRSRCTFLELCKTPELAAQVSLQPVDILGVDAAILFSDILTPVEPMGMKLDFVPGPVFEKPVRCMADVERLRIPRMEDDLPFVFDIIRILRRELADRVPLIGFGGAPFTLACYMVEGKGSKDFVQIKRMMYSAPDVYAALMEKITTMSMEYLNAQIAAGAQAIQIFDTWGGILSPSDYRTHVLPHTTRLINGLNRLTTPVIHFVKGAGTMLETVREAGGDVIGLDWHVDLATARNQLGPGVAVQGNLDPTVLFAPQAVIEQQVQRVLDENRGLPGFIFNLGHGILPTVPAENARFMVQCVQRLSRS.

Substrate-binding positions include 23–27, D72, Y147, T202, and H316; that span reads RQAGR.

The protein belongs to the uroporphyrinogen decarboxylase family. As to quaternary structure, homodimer.

It localises to the cytoplasm. The catalysed reaction is uroporphyrinogen III + 4 H(+) = coproporphyrinogen III + 4 CO2. It participates in porphyrin-containing compound metabolism; protoporphyrin-IX biosynthesis; coproporphyrinogen-III from 5-aminolevulinate: step 4/4. Catalyzes the decarboxylation of four acetate groups of uroporphyrinogen-III to yield coproporphyrinogen-III. This Pelobacter propionicus (strain DSM 2379 / NBRC 103807 / OttBd1) protein is Uroporphyrinogen decarboxylase.